Consider the following 571-residue polypeptide: uncharacterized protein (571 aa).

11 helical membrane passes run 5 to 27, 34 to 56, 61 to 79, 92 to 114, 161 to 183, 391 to 408, 412 to 434, 455 to 474, 484 to 506, 513 to 532, and 547 to 569; these read VILN…GYLV, TFVL…LNIT, IGSL…QGGA, LLAS…AWIF, TVGY…ATIF, FIFF…GLIS, FGIS…FGWI, LGLA…QAIT, FFLG…YYLL, VLLA…AALL, and SYAL…VTII.

The protein belongs to the AAE transporter (TC 2.A.81) family.

Its subcellular location is the cell membrane. This is an uncharacterized protein from Francisella tularensis subsp. tularensis (strain SCHU S4 / Schu 4).